The chain runs to 451 residues: CCAAT/enhancer-binding protein (451 aa).

Disordered stretches follow at residues 210–236 (TYNN…EPID), 267–298 (QSNN…NSTN), and 328–389 (LKHH…AKVR). 3 stretches are compositionally biased toward low complexity: residues 218-228 (ENSSVGSDSSS), 268-298 (SNNL…NSTN), and 334-350 (LQQT…QHAQ). Basic and acidic residues predominate over residues 359 to 370 (KHVDKGTEEYRR). One can recognise a bZIP domain in the interval 365–428 (TEEYRRRRER…SLHKQIYMQL (64 aa)). The segment at 369 to 398 (RRRRERNNIAVRKSREKAKVRSKEVEERVK) is basic motif. The leucine-zipper stretch occupies residues 400–407 (LLKEKDAL).

This sequence belongs to the bZIP family. C/EBP subfamily. Binds DNA as a dimer and can form stable heterodimers.

The protein localises to the nucleus. Functionally, may be required for the expression of gene products mediating border cell migration. Among the DNA sequences that this protein binds with high affinity is a conserved site within the promoter of its gene. In Drosophila virilis (Fruit fly), this protein is CCAAT/enhancer-binding protein (slbo).